A 324-amino-acid polypeptide reads, in one-letter code: UDP-N-acetylenolpyruvoylglucosamine reductase (324 aa).

Residues 38 to 231 (AGGSARRLYV…SRERIRSLLK (194 aa)) enclose the FAD-binding PCMH-type domain. Arginine 195 is an active-site residue. Serine 246 (proton donor) is an active-site residue. Glutamate 316 is an active-site residue.

This sequence belongs to the MurB family. FAD is required as a cofactor.

The protein resides in the cytoplasm. It catalyses the reaction UDP-N-acetyl-alpha-D-muramate + NADP(+) = UDP-N-acetyl-3-O-(1-carboxyvinyl)-alpha-D-glucosamine + NADPH + H(+). It functions in the pathway cell wall biogenesis; peptidoglycan biosynthesis. Functionally, cell wall formation. The sequence is that of UDP-N-acetylenolpyruvoylglucosamine reductase from Thiobacillus denitrificans (strain ATCC 25259 / T1).